Here is a 141-residue protein sequence, read N- to C-terminus: Ubiquitin-like protein ATG12 (141 aa).

The tract at residues 24-54 is disordered; that stretch reads LELSPETAIPEPPSSVAVSPGTEEPPGDTKK. G141 is covalently cross-linked (Glycyl lysine isopeptide (Gly-Lys) (interchain with K-? in acceptor protein)).

The protein belongs to the ATG12 family. In terms of assembly, forms a conjugate with ATG5. Part of the minor complex composed of 4 sets of ATG12-ATG5 and ATG16L1 (400 kDa); this complex interacts with ATG3 leading to disruption of ATG7 interaction and promotion of ATG8-like proteins lipidation. Forms an 800-kDa complex composed of ATG12-ATG5 and ATG16L2. Interacts with DHX58/RIG-1, IFIH1/MDA5 and MAVS/IPS-1 in monomeric form as well as in ATG12-ATG5 conjugate. The interaction with MAVS is further enhanced upon vesicular stomatitis virus (VSV) infection. Interacts with ATG3; this interaction is essential for phosphatidylethanolamine (PE)-conjugated ATG8-like proteins formation. Interacts with ATG7. Interacts with ATG10. The ATG12-ATG5 conjugate interacts with RAB33A; this interaction is bridged by ATG16L1 and promotes ATG12-ATG5-ATG16L1 complex recruitment to phagophores. Interacts with TECPR1. Interacts with SH3BGRL. The ATG12-ATG5 conjugate interacts with PDCD6IP (via the BRO1 domain); this interaction is bridged by ATG12 and promotes multiple PDCD6IP-mediated functions such as endolysosomal trafficking, macroautophagy and exosome biogenesis. In terms of processing, acetylated by EP300.

It localises to the cytoplasm. The protein resides in the preautophagosomal structure membrane. Functionally, ubiquitin-like protein involved in autophagy vesicles formation. Conjugation with ATG5 through a ubiquitin-like conjugating system involving also ATG7 as an E1-like activating enzyme and ATG10 as an E2-like conjugating enzyme, is essential for its function. The ATG12-ATG5 conjugate acts as an E3-like enzyme which is required for lipidation of ATG8 family proteins and their association to the vesicle membranes. The ATG12-ATG5 conjugate also negatively regulates the innate antiviral immune response by blocking the type I IFN production pathway through direct association with RARRES3 and MAVS. Also plays a role in translation or delivery of incoming viral RNA to the translation apparatus. As part of the ATG8 conjugation system with ATG5 and ATG16L1, required for recruitment of LRRK2 to stressed lysosomes and induction of LRRK2 kinase activity in response to lysosomal stress. This chain is Ubiquitin-like protein ATG12, found in Rattus norvegicus (Rat).